Here is a 156-residue protein sequence, read N- to C-terminus: Transcriptional repressor NrdR (156 aa).

The segment at 3–34 (CPFCQHDDTQVLDTRISEEGDSIRRRRRCVSC) is a zinc-finger region. Positions 49–139 (PVIVKKNGSR…VYKSFEDVAE (91 aa)) constitute an ATP-cone domain.

It belongs to the NrdR family. Requires Zn(2+) as cofactor.

In terms of biological role, negatively regulates transcription of bacterial ribonucleotide reductase nrd genes and operons by binding to NrdR-boxes. This chain is Transcriptional repressor NrdR, found in Herminiimonas arsenicoxydans.